The sequence spans 172 residues: Adenine phosphoribosyltransferase (172 aa).

Belongs to the purine/pyrimidine phosphoribosyltransferase family. Homodimer.

The protein localises to the cytoplasm. The catalysed reaction is AMP + diphosphate = 5-phospho-alpha-D-ribose 1-diphosphate + adenine. Its pathway is purine metabolism; AMP biosynthesis via salvage pathway; AMP from adenine: step 1/1. Functionally, catalyzes a salvage reaction resulting in the formation of AMP, that is energically less costly than de novo synthesis. The sequence is that of Adenine phosphoribosyltransferase from Streptococcus uberis (strain ATCC BAA-854 / 0140J).